A 263-amino-acid chain; its full sequence is uncharacterized protein (263 aa).

The protein to B.subtilis soj.

This is an uncharacterized protein from Pseudomonas putida (strain ATCC 47054 / DSM 6125 / CFBP 8728 / NCIMB 11950 / KT2440).